The following is a 351-amino-acid chain: THO complex subunit 3 (351 aa).

The disordered stretch occupies residues 1–20 (MAVPAAAMGPSALGQSGPGS). Ala-2 is modified (N-acetylalanine). WD repeat units follow at residues 53–94 (AHSA…KENN), 97–137 (GHGD…CIAT), 139–178 (NTKGENINICWSPDGQTIAVGNKDDVVTFIDAKTHRSKAE), 180–221 (QFKF…QSIN), 222–261 (AHPSNCICIKFDPMGKYFATGSADALVSLWDVDELVCVRC), and 264–303 (RLDWPVRTLSFSHDGKMLASASEDHFIDIAEVETGDKLWE).

This sequence belongs to the THOC3 family. In terms of assembly, component of the THO subcomplex, which is composed of THOC1, THOC2, THOC3, THOC5, THOC6 and THOC7. The THO subcomplex interacts with DDX39B to form the THO-DDX39B complex which multimerizes into a 28-subunit tetrameric assembly. Component of the transcription/export (TREX) complex at least composed of ALYREF/THOC4, DDX39B, SARNP/CIP29, CHTOP and the THO subcomplex; in the complex interacts with THOC2. TREX seems to have a dynamic structure involving ATP-dependent remodeling.

The protein resides in the nucleus. Its subcellular location is the nucleus speckle. Component of the THO subcomplex of the TREX complex which is thought to couple mRNA transcription, processing and nuclear export, and which specifically associates with spliced mRNA and not with unspliced pre-mRNA. Required for efficient export of polyadenylated RNA and spliced mRNA. The THOC1-THOC2-THOC3 core complex alone is sufficient to bind export factor NXF1-NXT1 and promote ATPase activity of DDX39B. TREX is recruited to spliced mRNAs by a transcription-independent mechanism, binds to mRNA upstream of the exon-junction complex (EJC) and is recruited in a splicing- and cap-dependent manner to a region near the 5' end of the mRNA where it functions in mRNA export to the cytoplasm via the TAP/NXF1 pathway. Functionally, (Microbial infection) The TREX complex is essential for the export of Kaposi's sarcoma-associated herpesvirus (KSHV) intronless mRNAs and infectious virus production. In Homo sapiens (Human), this protein is THO complex subunit 3 (THOC3).